Consider the following 290-residue polypeptide: MQKHYTVAWFLYSAPGVDPSPPCRSLGWKRKKEWSDESEEEPEKELAPEPEETWVVEMLCGLKMKLKQQRVSPILPEHHKDFNSQLAPGVDPSPPHRSFCWKRKREWWDESEESLEEEPRKVLAPEPEEIWVAEMLCGLKMKLKRRRVSLVLPEHHEAFNRLLEDPVIKRFLAWDKDLRVSDKYLLAMVIAYFSRAGLPSWQYQRIHFFLALYLANDMEEDDEDPKQNIFYFLYGKTRSRIPLIALFQKLRFQFFCSMSGRAWVSREELEEIQAYDPEHWVWARDRARLS.

A disordered region spans residues 16-50 (GVDPSPPCRSLGWKRKKEWSDESEEEPEKELAPEP). Acidic residues predominate over residues 36–50 (DESEEEPEKELAPEP).

This sequence belongs to the Speedy/Ringo family.

This Homo sapiens (Human) protein is Putative speedy protein-like protein 3.